Reading from the N-terminus, the 449-residue chain is 3-phosphoshikimate 1-carboxyvinyltransferase (449 aa).

3 residues coordinate 3-phosphoshikimate: Lys-28, Ser-29, and Arg-33. Lys-28 contacts phosphoenolpyruvate. Phosphoenolpyruvate-binding residues include Gly-105 and Arg-133. Residues Ser-179, Gln-181, Asp-332, and Lys-359 each contribute to the 3-phosphoshikimate site. Phosphoenolpyruvate is bound at residue Gln-181. The Proton acceptor role is filled by Asp-332. 2 residues coordinate phosphoenolpyruvate: Arg-363 and Arg-406.

Belongs to the EPSP synthase family. In terms of assembly, monomer.

The protein localises to the cytoplasm. It carries out the reaction 3-phosphoshikimate + phosphoenolpyruvate = 5-O-(1-carboxyvinyl)-3-phosphoshikimate + phosphate. The protein operates within metabolic intermediate biosynthesis; chorismate biosynthesis; chorismate from D-erythrose 4-phosphate and phosphoenolpyruvate: step 6/7. Catalyzes the transfer of the enolpyruvyl moiety of phosphoenolpyruvate (PEP) to the 5-hydroxyl of shikimate-3-phosphate (S3P) to produce enolpyruvyl shikimate-3-phosphate and inorganic phosphate. The polypeptide is 3-phosphoshikimate 1-carboxyvinyltransferase (Nitrobacter hamburgensis (strain DSM 10229 / NCIMB 13809 / X14)).